A 189-amino-acid polypeptide reads, in one-letter code: Proline-rich protein 29 (189 aa).

The tract at residues Ser-152–Leu-189 is disordered.

In Homo sapiens (Human), this protein is Proline-rich protein 29 (PRR29).